A 25-amino-acid chain; its full sequence is Toxin LyeTx 1 (25 aa).

Leucine 25 carries the post-translational modification Leucine amide.

As to expression, expressed by the venom gland.

It is found in the secreted. In terms of biological role, has antimicrobial activity against Gram-positive bacterium S.aureus (MIC=3.79 uM), Gram-negative bacterium E.coli (MIC=7.81 uM) and yeasts C.krusei (MIC=26.3 uM) and C.neoformans (MIC=13.2 uM). Has hemolytic activity against rabbit erythrocytes. Forms pores in lipid bilayers in vitro; pore formation is reduced when cholesterol is present in the bilayers. In Lycosa erythrognatha (Wolf spider), this protein is Toxin LyeTx 1.